Consider the following 132-residue polypeptide: Large-conductance mechanosensitive channel (132 aa).

The next 3 helical transmembrane spans lie at 8–28, 30–50, and 67–87; these read FALK…GAFG, IVSS…LGGV, and GAFI…FLFI.

The protein belongs to the MscL family. In terms of assembly, homopentamer.

It localises to the cell membrane. Its function is as follows. Channel that opens in response to stretch forces in the membrane lipid bilayer. May participate in the regulation of osmotic pressure changes within the cell. The protein is Large-conductance mechanosensitive channel of Bacillus cytotoxicus (strain DSM 22905 / CIP 110041 / 391-98 / NVH 391-98).